Consider the following 195-residue polypeptide: Small ribosomal subunit protein uS10c (195 aa).

The N-terminal 59 residues, 1 to 59 (MATSSISAALLSPLTLRNASSSSTKQDFSTLSSLNLRRTLTPTLQSGHTLSNSSNFATF), are a transit peptide targeting the chloroplast.

The protein belongs to the universal ribosomal protein uS10 family. As to quaternary structure, component of the chloroplast small ribosomal subunit (SSU). Mature 70S chloroplast ribosomes of higher plants consist of a small (30S) and a large (50S) subunit. The 30S small subunit contains 1 molecule of ribosomal RNA (16S rRNA) and 24 different proteins. The 50S large subunit contains 3 rRNA molecules (23S, 5S and 4.5S rRNA) and 33 different proteins.

The protein localises to the plastid. Its subcellular location is the chloroplast. Its function is as follows. Component of the chloroplast ribosome (chloro-ribosome), a dedicated translation machinery responsible for the synthesis of chloroplast genome-encoded proteins, including proteins of the transcription and translation machinery and components of the photosynthetic apparatus. The sequence is that of Small ribosomal subunit protein uS10c (RPS10) from Spinacia oleracea (Spinach).